We begin with the raw amino-acid sequence, 590 residues long: Glutathione S-transferase T3 (590 aa).

A GST N-terminal domain is found at 1–82 (MKLKVYADRM…YLSSAYPSVV (82 aa)). Residues 11 to 12 (SQ), 40 to 41 (QL), 53 to 54 (KV), and 66 to 67 (ES) contribute to the glutathione site. The GST C-terminal domain occupies 89-232 (DLSKRARIHS…KDRCQKQREM (144 aa)). Positions 265–336 (DRRKHRRKWS…HCKQRWSKLN (72 aa)) constitute a Myb-like domain. The disordered stretch occupies residues 402-427 (SKGGGSSKRTKLNNGDRVYSSSSNPE).

Belongs to the GST superfamily. Theta family.

The protein localises to the nucleus. The catalysed reaction is RX + glutathione = an S-substituted glutathione + a halide anion + H(+). In terms of biological role, may be involved in the conjugation of reduced glutathione to a wide number of exogenous and endogenous hydrophobic electrophiles and have a detoxification role against certain herbicides. This chain is Glutathione S-transferase T3 (GSTT3), found in Arabidopsis thaliana (Mouse-ear cress).